A 124-amino-acid polypeptide reads, in one-letter code: Small ribosomal subunit protein uS12 (124 aa).

Residues 1-23 are disordered; sequence MATINQLVRKPRVRQKQKSNVPA. D89 carries the post-translational modification 3-methylthioaspartic acid. The interval 103–124 is disordered; sequence DTAGVGDRRQGRSKYGAKRPKG. The span at 113–124 shows a compositional bias: basic residues; sequence GRSKYGAKRPKG.

This sequence belongs to the universal ribosomal protein uS12 family. In terms of assembly, part of the 30S ribosomal subunit. Contacts proteins S8 and S17. May interact with IF1 in the 30S initiation complex.

Functionally, with S4 and S5 plays an important role in translational accuracy. Its function is as follows. Interacts with and stabilizes bases of the 16S rRNA that are involved in tRNA selection in the A site and with the mRNA backbone. Located at the interface of the 30S and 50S subunits, it traverses the body of the 30S subunit contacting proteins on the other side and probably holding the rRNA structure together. The combined cluster of proteins S8, S12 and S17 appears to hold together the shoulder and platform of the 30S subunit. This Nitrosococcus oceani (strain ATCC 19707 / BCRC 17464 / JCM 30415 / NCIMB 11848 / C-107) protein is Small ribosomal subunit protein uS12.